We begin with the raw amino-acid sequence, 249 residues long: uncharacterized protein (249 aa).

Residues 7–64 (PRVHVFLAEKGVGSRRFCEELIRKKLVRVNNTIAKLGDKVTLGDRIIYKKQIFVFKDF) enclose the S4 RNA-binding domain. Catalysis depends on Asp-112, which acts as the Nucleophile.

This sequence belongs to the pseudouridine synthase RsuA family.

The catalysed reaction is a uridine in RNA = a pseudouridine in RNA. This is an uncharacterized protein from Borreliella burgdorferi (strain ATCC 35210 / DSM 4680 / CIP 102532 / B31) (Borrelia burgdorferi).